Reading from the N-terminus, the 565-residue chain is Glycine--tRNA ligase (565 aa).

Substrate is bound by residues Arg98 and Glu164. Residues 196 to 198, 206 to 211, 323 to 324, and 440 to 443 each bind ATP; these read RNE, IRLREF, EI, and GIDR. 211 to 215 is a binding site for substrate; it reads FTQAE. 436–440 is a substrate binding site; the sequence is EPSFG.

The protein belongs to the class-II aminoacyl-tRNA synthetase family.

The protein localises to the cytoplasm. The enzyme catalyses tRNA(Gly) + glycine + ATP = glycyl-tRNA(Gly) + AMP + diphosphate. Its function is as follows. Catalyzes the attachment of glycine to tRNA(Gly). This is Glycine--tRNA ligase from Methanothermobacter thermautotrophicus (strain ATCC 29096 / DSM 1053 / JCM 10044 / NBRC 100330 / Delta H) (Methanobacterium thermoautotrophicum).